The primary structure comprises 206 residues: Small ribosomal subunit protein uS4 (206 aa).

The S4 RNA-binding domain occupies 96–157; that stretch reads SRLDNVVYRM…KAKKQVRIQE (62 aa).

This sequence belongs to the universal ribosomal protein uS4 family. In terms of assembly, part of the 30S ribosomal subunit. Contacts protein S5. The interaction surface between S4 and S5 is involved in control of translational fidelity.

Functionally, one of the primary rRNA binding proteins, it binds directly to 16S rRNA where it nucleates assembly of the body of the 30S subunit. Its function is as follows. With S5 and S12 plays an important role in translational accuracy. The protein is Small ribosomal subunit protein uS4 of Neisseria gonorrhoeae (strain ATCC 700825 / FA 1090).